The primary structure comprises 20 residues: Flagellar filament 33 kDa core protein (20 aa).

The protein belongs to the bacterial flagellin family. In terms of assembly, the flagellum consists of an outer layer composed of repeating units of FlaA around a core that contains one or all of five antigenically related polypeptides.

The protein resides in the periplasmic flagellum. Its subcellular location is the periplasm. In terms of biological role, component of the core of the flagella. The sequence is that of Flagellar filament 33 kDa core protein from Spirochaeta aurantia.